The chain runs to 209 residues: Thymidylate kinase (209 aa).

11-18 (GPDGAGKT) is a binding site for ATP.

It belongs to the thymidylate kinase family.

It carries out the reaction dTMP + ATP = dTDP + ADP. Functionally, phosphorylation of dTMP to form dTDP in both de novo and salvage pathways of dTTP synthesis. In Streptococcus thermophilus (strain ATCC BAA-250 / LMG 18311), this protein is Thymidylate kinase.